We begin with the raw amino-acid sequence, 556 residues long: uncharacterized protein (556 aa).

Disordered stretches follow at residues 1 to 40 (MSNS…TNEN), 80 to 243 (NTTQ…KQSW), 278 to 324 (YDSD…SSLP), 363 to 391 (RTKQ…KFVD), and 422 to 525 (DSKQ…ENSA). A compositionally biased stretch (low complexity) spans 7-25 (NNNNNTNNNNNNNNNNNGN). A compositionally biased stretch (acidic residues) spans 30–40 (EEPDDDSTNEN). Composition is skewed to low complexity over residues 80–133 (NTTQ…GTRS) and 164–181 (NDNN…NDSN). Acidic residues predominate over residues 182-192 (IVDDDEDEEEF). Low complexity predominate over residues 207–226 (STSSPSSTSSPIVSPQTQTS). Over residues 227-243 (KLESSMDVSPSSGKQSW) the composition is skewed to polar residues. Low complexity-rich tracts occupy residues 292–322 (NNSS…NSSS), 369–388 (KVQQ…NNNK), and 425–525 (QQNV…ENSA). A helical membrane pass occupies residues 528–548 (GSFIKNAVIFIFILLLMVVGF).

The protein localises to the membrane. This is an uncharacterized protein from Dictyostelium discoideum (Social amoeba).